The sequence spans 186 residues: Adenylate kinase isoenzyme 6 homolog (186 aa).

Residues Gly15, Gly17, Lys18, Ser19, and Thr20 each contribute to the ATP site. The tract at residues 48–71 (NLSNIIKDERLYKEFDDELDASIY) is NMPbind. The tract at residues 126-136 (KRNYTKEKIKN) is LID. Arg127 provides a ligand contact to ATP.

Belongs to the adenylate kinase family. AK6 subfamily. As to quaternary structure, monomer and homodimer. Interacts with small ribosomal subunit protein uS11. Not a structural component of 43S pre-ribosomes, but transiently interacts with them by binding to uS11.

It is found in the cytoplasm. It localises to the nucleus. It carries out the reaction AMP + ATP = 2 ADP. It catalyses the reaction ATP + H2O = ADP + phosphate + H(+). Its function is as follows. Broad-specificity nucleoside monophosphate (NMP) kinase that catalyzes the reversible transfer of the terminal phosphate group between nucleoside triphosphates and monophosphates. Also has ATPase activity. Involved in the late cytoplasmic maturation steps of the 40S ribosomal particles, specifically 18S rRNA maturation. While NMP activity is not required for ribosome maturation, ATPase activity is. Associates transiently with small ribosomal subunit protein uS11. ATP hydrolysis breaks the interaction with uS11. May temporarily remove uS11 from the ribosome to enable a conformational change of the ribosomal RNA that is needed for the final maturation step of the small ribosomal subunit. Its NMP activity may have a role in nuclear energy homeostasis. The protein is Adenylate kinase isoenzyme 6 homolog of Plasmodium falciparum (isolate 3D7).